Here is a 100-residue protein sequence, read N- to C-terminus: Urease subunit gamma (100 aa).

This sequence belongs to the urease gamma subunit family. Heterotrimer of UreA (gamma), UreB (beta) and UreC (alpha) subunits. Three heterotrimers associate to form the active enzyme.

The protein resides in the cytoplasm. The enzyme catalyses urea + 2 H2O + H(+) = hydrogencarbonate + 2 NH4(+). The protein operates within nitrogen metabolism; urea degradation; CO(2) and NH(3) from urea (urease route): step 1/1. The protein is Urease subunit gamma of Ruegeria sp. (strain TM1040) (Silicibacter sp.).